Reading from the N-terminus, the 119-residue chain is MFILAEVSDFILDIVAPLCPTISEACLTKHSIRKCTSEGTLSGESWSLSEWLSASFRATRLISASSCSSLVSSPFFLLSVLGETSTVVGVVVIDGFVVSVDIIELKSITERLFNAALDD.

A run of 2 helical transmembrane segments spans residues 61 to 80 (LISA…LLSV) and 87 to 103 (VVGV…VDII).

It is found in the membrane. This is an uncharacterized protein from Saccharomyces cerevisiae (strain ATCC 204508 / S288c) (Baker's yeast).